The sequence spans 90 residues: Probable Fe(2+)-trafficking protein (90 aa).

Belongs to the Fe(2+)-trafficking protein family.

In terms of biological role, could be a mediator in iron transactions between iron acquisition and iron-requiring processes, such as synthesis and/or repair of Fe-S clusters in biosynthetic enzymes. The chain is Probable Fe(2+)-trafficking protein from Azoarcus sp. (strain BH72).